Reading from the N-terminus, the 290-residue chain is Outer dense fiber protein 4 (290 aa).

A Phosphoserine modification is found at S28. 4 helical membrane passes run 44–64 (AQVVASEFSLLAFLLLLLMVF), 132–152 (ISFILAVGLGFVLTVWLHLPY), 164–184 (LIGIILSFCEVTLIFLTLLLF), and 201–221 (IGWSYFIGWLVLILYLTCGIL). The segment at 262–290 (ADILDPTQDDQKPLSSDNIALPPNPDTTD) is disordered.

Its subcellular location is the membrane. Functionally, component of the outer dense fibers (ODF) of spermatozoa which could be involved in sperm tail structure, sperm movement and general organization of cellular cytoskeleton. This chain is Outer dense fiber protein 4 (Odf4), found in Rattus norvegicus (Rat).